Reading from the N-terminus, the 193-residue chain is dTTP/UTP pyrophosphatase (193 aa).

Catalysis depends on aspartate 71, which acts as the Proton acceptor.

Belongs to the Maf family. YhdE subfamily. A divalent metal cation serves as cofactor.

It localises to the cytoplasm. The catalysed reaction is dTTP + H2O = dTMP + diphosphate + H(+). It carries out the reaction UTP + H2O = UMP + diphosphate + H(+). Its function is as follows. Nucleoside triphosphate pyrophosphatase that hydrolyzes dTTP and UTP. May have a dual role in cell division arrest and in preventing the incorporation of modified nucleotides into cellular nucleic acids. This is dTTP/UTP pyrophosphatase from Dictyoglomus thermophilum (strain ATCC 35947 / DSM 3960 / H-6-12).